We begin with the raw amino-acid sequence, 418 residues long: Metal tolerance protein 1 (418 aa).

Residues 1-56 (MDSHNSAPPQIAEVRMDISSSTSVAAGNKVCRGAACDFSDSSNSSKDARERMASMR) are Cytoplasmic-facing. The helical transmembrane segment at 57–77 (KLIIAVILCIIFMAVEVVGGI) threads the bilayer. At 78–89 (KANSLAILTDAA) the chain is on the vacuolar side. The helical transmembrane segment at 90-110 (HLLSDVAAFAISLFSLWAAGW) threads the bilayer. The Cytoplasmic segment spans residues 111–122 (EATPQQSYGFFR). Residues 123–143 (IEILGALVSIQLIWLLAGILV) traverse the membrane as a helical segment. Over 144–160 (YEAIVRLINESGEVQGS) the chain is Vacuolar. Residues 161–181 (LMFAVSAFGLFVNIIMAVLLG) form a helical membrane-spanning segment. Residues 182 to 246 (HDHGHGHGHG…HHPGTGHHHH (65 aa)) are required for zinc-binding. At 182–282 (HDHGHGHGHG…RRNINVHSAY (101 aa)) the chain is on the cytoplasmic side. Positions 186–248 (HGHGHGHGHG…PGTGHHHHDA (63 aa)) are disordered. The span at 196–227 (HSHDHDHGGSDHDHHHHEDQEHGHVHHHEDGH) shows a compositional bias: basic and acidic residues. The span at 235-245 (LHHHPGTGHHH) shows a compositional bias: basic residues. A helical membrane pass occupies residues 283-303 (LHVLGDSIQSIGVMIGGAIIW). Residues 304 to 307 (YKPE) are Vacuolar-facing. The chain crosses the membrane as a helical span at residues 308–328 (WKIIDLICTLIFSVIVLFTTI). The Cytoplasmic segment spans residues 329-418 (KMLRNILEVL…SHVTIQIERE (90 aa)).

Belongs to the cation diffusion facilitator (CDF) transporter (TC 2.A.4) family. SLC30A subfamily.

The protein resides in the vacuole membrane. Functionally, involved in sequestration of excess zinc in the cytoplasm into vacuoles to maintain zinc homeostasis. This is Metal tolerance protein 1 (MTP1) from Oryza sativa subsp. japonica (Rice).